The chain runs to 637 residues: 1-deoxy-D-xylulose-5-phosphate synthase (637 aa).

Thiamine diphosphate-binding positions include His76 and 117–119 (GHS). Mg(2+) is bound at residue Asp148. Residues 149 to 150 (GA), Asn177, Tyr294, and Glu381 contribute to the thiamine diphosphate site. Asn177 contributes to the Mg(2+) binding site.

This sequence belongs to the transketolase family. DXPS subfamily. In terms of assembly, homodimer. Requires Mg(2+) as cofactor. It depends on thiamine diphosphate as a cofactor.

It carries out the reaction D-glyceraldehyde 3-phosphate + pyruvate + H(+) = 1-deoxy-D-xylulose 5-phosphate + CO2. It functions in the pathway metabolic intermediate biosynthesis; 1-deoxy-D-xylulose 5-phosphate biosynthesis; 1-deoxy-D-xylulose 5-phosphate from D-glyceraldehyde 3-phosphate and pyruvate: step 1/1. In terms of biological role, catalyzes the acyloin condensation reaction between C atoms 2 and 3 of pyruvate and glyceraldehyde 3-phosphate to yield 1-deoxy-D-xylulose-5-phosphate (DXP). This Neisseria gonorrhoeae (strain ATCC 700825 / FA 1090) protein is 1-deoxy-D-xylulose-5-phosphate synthase.